Consider the following 360-residue polypeptide: Malate dehydrogenase (360 aa).

Belongs to the LDH2/MDH2 oxidoreductase family. In terms of assembly, homodimer.

It is found in the cytoplasm. It catalyses the reaction (S)-malate + NAD(+) = oxaloacetate + NADH + H(+). This chain is Malate dehydrogenase (mdh), found in Pyrococcus horikoshii (strain ATCC 700860 / DSM 12428 / JCM 9974 / NBRC 100139 / OT-3).